The primary structure comprises 172 residues: Nascent polypeptide-associated complex subunit beta (172 aa).

Disordered regions lie at residues 36–58 and 142–172; these read KTGK…GDDK and QNMQ…DKVE. The segment covering 41–50 has biased composition (basic residues); that stretch reads TPRRKMKRAP. Residues 54–119 form the NAC-A/B domain; it reads GGDDKKLQQT…GEDKELTELV (66 aa).

Belongs to the NAC-beta family. In terms of assembly, part of the nascent polypeptide-associated complex (NAC), consisting of EGD2 and EGD1. NAC associates with ribosomes via EGD1.

It is found in the cytoplasm. Its subcellular location is the nucleus. Its function is as follows. Component of the nascent polypeptide-associated complex (NAC), a dynamic component of the ribosomal exit tunnel, protecting the emerging polypeptides from interaction with other cytoplasmic proteins to ensure appropriate nascent protein targeting. The NAC complex also promotes mitochondrial protein import by enhancing productive ribosome interactions with the outer mitochondrial membrane and blocks the inappropriate interaction of ribosomes translating non-secretory nascent polypeptides with translocation sites in the membrane of the endoplasmic reticulum. EGD1 may act as a transcription factor that exert a negative effect on the expression of several genes that are transcribed by RNA polymerase II. This is Nascent polypeptide-associated complex subunit beta (EGD1) from Pyricularia oryzae (strain 70-15 / ATCC MYA-4617 / FGSC 8958) (Rice blast fungus).